The chain runs to 89 residues: Small ribosomal subunit protein uS15 (89 aa).

Residues 1 to 11 (MSITAERKAEV) are compositionally biased toward basic and acidic residues. The disordered stretch occupies residues 1-25 (MSITAERKAEVIKTNARKSGDTGSP).

It belongs to the universal ribosomal protein uS15 family. In terms of assembly, part of the 30S ribosomal subunit. Forms a bridge to the 50S subunit in the 70S ribosome, contacting the 23S rRNA.

One of the primary rRNA binding proteins, it binds directly to 16S rRNA where it helps nucleate assembly of the platform of the 30S subunit by binding and bridging several RNA helices of the 16S rRNA. Functionally, forms an intersubunit bridge (bridge B4) with the 23S rRNA of the 50S subunit in the ribosome. The polypeptide is Small ribosomal subunit protein uS15 (Nitrobacter hamburgensis (strain DSM 10229 / NCIMB 13809 / X14)).